The following is a 121-amino-acid chain: Large ribosomal subunit protein bL20 (121 aa).

This sequence belongs to the bacterial ribosomal protein bL20 family.

Functionally, binds directly to 23S ribosomal RNA and is necessary for the in vitro assembly process of the 50S ribosomal subunit. It is not involved in the protein synthesizing functions of that subunit. This Petrotoga mobilis (strain DSM 10674 / SJ95) protein is Large ribosomal subunit protein bL20.